The primary structure comprises 296 residues: Cytochrome bc1 complex cytochrome c subunit (296 aa).

Positions 1-19 (MMETNPQTSEGAGKAQSSA) are enriched in polar residues. The interval 1 to 27 (MMETNPQTSEGAGKAQSSAKKVKNRRK) is disordered. The helical transmembrane segment at 32-52 (VAGAMALTIGLSGAGILATAI) threads the bilayer. Cytochrome c domains lie at 67-147 (ALIA…AANG) and 177-255 (LDVS…KSTK). 6 residues coordinate heme c: Cys-80, Cys-83, His-84, Cys-190, Cys-193, and His-194. A helical membrane pass occupies residues 274–294 (GLFMWGIGIMVLIAAAMWIGS).

The cytochrome bc1 complex is composed of a cytochrome b (QcrB), the Rieske iron-sulfur protein (QcrA) and a diheme cytochrome c (QcrC) subunit. The bc1 complex forms a supercomplex with cytochrome c oxidase (cytochrome aa3). Post-translationally, binds 2 heme c groups covalently per subunit.

The protein localises to the cell membrane. The catalysed reaction is a quinol + 2 Fe(III)-[cytochrome c](out) = a quinone + 2 Fe(II)-[cytochrome c](out) + 2 H(+)(out). In terms of biological role, cytochrome c1 subunit of the cytochrome bc1 complex, an essential component of the respiratory electron transport chain required for ATP synthesis. The bc1 complex catalyzes the oxidation of menaquinol and the reduction of cytochrome c in the respiratory chain. The bc1 complex operates through a Q-cycle mechanism that couples electron transfer to generation of the proton gradient that drives ATP synthesis. The chain is Cytochrome bc1 complex cytochrome c subunit (qcrC) from Corynebacterium efficiens (strain DSM 44549 / YS-314 / AJ 12310 / JCM 11189 / NBRC 100395).